The primary structure comprises 611 residues: MSKIIGIDLGTTNSCVAVMEGGEPKVIPNPEGNRTTPSVVAFKNEERQVGEVAKRQAITNPNTIMSVKRHMGTDYKVEVEGKDYTPQEISAIILQNLKASAEAYLGETVTKAVITVPAYFNDAERQATKDAGRIAGLEVERIINEPTAAALAYGLEKQDEEQKILVYDLGGGTFDVSILELADGTFEVISTAGDNRLGGDDFDQVIIDHLVAEFKKENNIDLSQDKMALQRLKDAAEKAKKDLSGVTQTQISLPFISAGAAGPLHLELTLTRAKFEELSAGLVERTLEPTRRALKDAGFAPSELDKVILVGGSTRIPAVQEAIKRETGKEPYKGVNPDEVVALGAAVQGGVLTGDVEGVLLLDVTPLSLGIETMGGVFTKLIERNTTIPTSKSQVFSTAADNQPAVDIHVLQGERPMSADNKTLGRFQLTDLPPAPRGIPQIEVTFDIDANGIVNVRAKDLGTSKEQAITIQSSSGLSDEEVERMVQEAEANADADQKRKEEVELRNEADQLVFQTDKVVKDLEGKVDAAEVAKATEAKEALQAAIEKNELEEIRAKKDALQEIVQQLTVKLYEQAQAAAGQAEGAQGAQDAGTKKDNVVDAEFEEVKEDK.

Thr-173 is subject to Phosphothreonine; by autocatalysis. The segment covering 577–592 (QAAAGQAEGAQGAQDA) has biased composition (low complexity). Positions 577-611 (QAAAGQAEGAQGAQDAGTKKDNVVDAEFEEVKEDK) are disordered. The segment covering 600–611 (VDAEFEEVKEDK) has biased composition (acidic residues).

This sequence belongs to the heat shock protein 70 family.

Functionally, acts as a chaperone. The chain is Chaperone protein DnaK from Bacillus cereus (strain G9842).